We begin with the raw amino-acid sequence, 266 residues long: MQSLIWASAIPLYITHSSSTIPYLINVPRVSYLALLFPRLTSFFGENVSSFSYEGILLKNLPVGLLCDLYQPELPWRIELGDGPLFDIHDTFINSVKEADFMRNGNAKGIMSMSKEHSTQLWNSVQDNDFSTYHKISTILLNPATALKHIPLRIYLPSSSTPSSTPHPGSSGSSKAPSTASPPSPLFTFKTIQTLIQPQTTSREPQTLGGALNSVLPTLFPSKRDAILAEVILHGATVPFKAVLEDLMREASYADGWLNVCVVMLN.

Lysine 97 is covalently cross-linked (Glycyl lysine isopeptide (Lys-Gly) (interchain with G-Cter in atg12)). The span at 158–179 (SSSTPSSTPHPGSSGSSKAPST) shows a compositional bias: low complexity. Residues 158-182 (SSSTPSSTPHPGSSGSSKAPSTASP) form a disordered region.

It belongs to the ATG5 family. In terms of assembly, conjugated with atg12. Conjugated to atg12; which is essential for autophagy.

It localises to the preautophagosomal structure membrane. In terms of biological role, involved in cytoplasm to vacuole transport (Cvt) and autophagic vesicle formation. Autophagy is essential for maintenance of amino acid levels and protein synthesis under nitrogen starvation. Required for selective autophagic degradation of the nucleus (nucleophagy). Also required for mitophagy, which eliminates defective or superfluous mitochondria in order to fulfill cellular energy requirements and prevent excess ROS production. Conjugation with atg12, through a ubiquitin-like conjugating system involving atg7 as an E1-like activating enzyme and atg10 as an E2-like conjugating enzyme, is essential for its function. The atg12-atg5 conjugate acts as an E3-like enzyme which is required for lipidation of atg8 and atg8 association to the vesicle membranes. The protein is Autophagy protein 5 (atg5) of Sclerotinia sclerotiorum (strain ATCC 18683 / 1980 / Ss-1) (White mold).